A 119-amino-acid chain; its full sequence is Holo-[acyl-carrier-protein] synthase (119 aa).

2 residues coordinate Mg(2+): Asp5 and Glu51.

This sequence belongs to the P-Pant transferase superfamily. AcpS family. Mg(2+) is required as a cofactor.

It is found in the cytoplasm. The enzyme catalyses apo-[ACP] + CoA = holo-[ACP] + adenosine 3',5'-bisphosphate + H(+). In terms of biological role, transfers the 4'-phosphopantetheine moiety from coenzyme A to a Ser of acyl-carrier-protein. This chain is Holo-[acyl-carrier-protein] synthase, found in Helicobacter pylori (strain HPAG1).